A 183-amino-acid chain; its full sequence is ATP synthase subunit b, chloroplastic (183 aa).

A helical transmembrane segment spans residues Ile20–Tyr42.

The protein belongs to the ATPase B chain family. As to quaternary structure, F-type ATPases have 2 components, F(1) - the catalytic core - and F(0) - the membrane proton channel. F(1) has five subunits: alpha(3), beta(3), gamma(1), delta(1), epsilon(1). F(0) has four main subunits: a(1), b(1), b'(1) and c(10-14). The alpha and beta chains form an alternating ring which encloses part of the gamma chain. F(1) is attached to F(0) by a central stalk formed by the gamma and epsilon chains, while a peripheral stalk is formed by the delta, b and b' chains.

It is found in the plastid. The protein localises to the chloroplast thylakoid membrane. Functionally, f(1)F(0) ATP synthase produces ATP from ADP in the presence of a proton or sodium gradient. F-type ATPases consist of two structural domains, F(1) containing the extramembraneous catalytic core and F(0) containing the membrane proton channel, linked together by a central stalk and a peripheral stalk. During catalysis, ATP synthesis in the catalytic domain of F(1) is coupled via a rotary mechanism of the central stalk subunits to proton translocation. Its function is as follows. Component of the F(0) channel, it forms part of the peripheral stalk, linking F(1) to F(0). The protein is ATP synthase subunit b, chloroplastic of Euglena gracilis.